The following is a 480-amino-acid chain: Glycogen synthase 1 (480 aa).

Lysine 15 contributes to the ADP-alpha-D-glucose binding site.

Belongs to the glycosyltransferase 1 family. Bacterial/plant glycogen synthase subfamily.

The catalysed reaction is [(1-&gt;4)-alpha-D-glucosyl](n) + ADP-alpha-D-glucose = [(1-&gt;4)-alpha-D-glucosyl](n+1) + ADP + H(+). It functions in the pathway glycan biosynthesis; glycogen biosynthesis. Its function is as follows. Synthesizes alpha-1,4-glucan chains using ADP-glucose. In Rhizobium meliloti (strain 1021) (Ensifer meliloti), this protein is Glycogen synthase 1 (glgA1).